Reading from the N-terminus, the 121-residue chain is Small ribosomal subunit protein uS13 (121 aa).

Residues 93–121 are disordered; that stretch reads RNLPVRGQRTRTNARTCKGPRKSMNKQFK. Basic residues predominate over residues 110-121; sequence KGPRKSMNKQFK.

This sequence belongs to the universal ribosomal protein uS13 family. In terms of assembly, part of the 30S ribosomal subunit. Forms a loose heterodimer with protein S19. Forms two bridges to the 50S subunit in the 70S ribosome.

In terms of biological role, located at the top of the head of the 30S subunit, it contacts several helices of the 16S rRNA. In the 70S ribosome it contacts the 23S rRNA (bridge B1a) and protein L5 of the 50S subunit (bridge B1b), connecting the 2 subunits; these bridges are implicated in subunit movement. Contacts the tRNAs in the A and P-sites. In Blochmanniella pennsylvanica (strain BPEN), this protein is Small ribosomal subunit protein uS13.